The primary structure comprises 341 residues: Protein pelota homolog (341 aa).

The protein belongs to the eukaryotic release factor 1 family. Pelota subfamily. In terms of assembly, monomer. It depends on a divalent metal cation as a cofactor.

It is found in the cytoplasm. Functionally, may function in recognizing stalled ribosomes, interact with stem-loop structures in stalled mRNA molecules, and effect endonucleolytic cleavage of the mRNA. May play a role in the release non-functional ribosomes and degradation of damaged mRNAs. Has endoribonuclease activity. The protein is Protein pelota homolog of Sulfurisphaera tokodaii (strain DSM 16993 / JCM 10545 / NBRC 100140 / 7) (Sulfolobus tokodaii).